Consider the following 512-residue polypeptide: NAD-dependent deacetylase sir2A (512 aa).

The UBP-type zinc-finger motif lies at Ile-7 to Asn-110. 12 residues coordinate Zn(2+): Cys-9, His-11, Cys-34, Cys-37, Cys-46, Cys-49, Cys-54, His-61, His-65, His-71, Cys-84, and Cys-87. Positions Asp-113–Lys-122 are enriched in basic and acidic residues. The tract at residues Asp-113 to Ser-196 is disordered. Positions Val-130 to Asn-175 are enriched in low complexity. A compositionally biased stretch (acidic residues) spans Asn-176–Glu-195. Positions Cys-231–Glu-503 constitute a Deacetylase sirtuin-type domain. His-361 functions as the Proton acceptor in the catalytic mechanism. Cys-369, Cys-372, Cys-393, and Cys-399 together coordinate Zn(2+).

The protein belongs to the sirtuin family. Zn(2+) serves as cofactor.

It catalyses the reaction N(6)-acetyl-L-lysyl-[protein] + NAD(+) + H2O = 2''-O-acetyl-ADP-D-ribose + nicotinamide + L-lysyl-[protein]. Its function is as follows. NAD-dependent deacetylase, which plays an important role in the regulation of transcriptional repression. This is NAD-dependent deacetylase sir2A (sir2A) from Dictyostelium discoideum (Social amoeba).